The chain runs to 176 residues: Lipoprotein signal peptidase (176 aa).

The next 4 helical transmembrane spans lie at 26-46 (LWMAFALLVVVLDQFFKIVIV), 60-80 (FFNLVLVYNKGAAFSFLADAG), 82-102 (WQRWFFTGLGLVVGAFIVWLL), and 107-127 (GQKLFCFAVSLILGGAVGNVV). Catalysis depends on residues Asp137 and Asp155. A helical membrane pass occupies residues 147-167 (HWPAFNVADCAITVGAVLLIV).

It belongs to the peptidase A8 family.

The protein localises to the cell inner membrane. It catalyses the reaction Release of signal peptides from bacterial membrane prolipoproteins. Hydrolyzes -Xaa-Yaa-Zaa-|-(S,diacylglyceryl)Cys-, in which Xaa is hydrophobic (preferably Leu), and Yaa (Ala or Ser) and Zaa (Gly or Ala) have small, neutral side chains.. It participates in protein modification; lipoprotein biosynthesis (signal peptide cleavage). In terms of biological role, this protein specifically catalyzes the removal of signal peptides from prolipoproteins. This is Lipoprotein signal peptidase from Cupriavidus pinatubonensis (strain JMP 134 / LMG 1197) (Cupriavidus necator (strain JMP 134)).